Here is a 552-residue protein sequence, read N- to C-terminus: Probable glucomannan 4-beta-mannosyltransferase 10 (552 aa).

Residues 62-82 (IVPLFKCLVAFCLIISLLVFI) traverse the membrane as a helical segment. The active site involves D161. The substrate site is built by D220 and D222. D314 is a catalytic residue. A run of 4 helical transmembrane segments spans residues 393-413 (IIVHCFTFIFYCVILPTSVFF), 430-450 (ITLCIVIATPRSFYLVIFWIL), 509-529 (EIMVGIYILCCACYGLFFGNT), and 530-550 (LLYLYLFMQAVAFLISGVGFV).

It belongs to the glycosyltransferase 2 family. Plant cellulose synthase-like A subfamily.

The protein resides in the golgi apparatus membrane. It catalyses the reaction GDP-mannose + (glucomannan)n = GDP + (glucomannan)n+1.. Functionally, probable mannan synthase which consists of a 4-beta-mannosyltransferase activity on mannan using GDP-mannose. The beta-1,4-mannan product is the backbone for galactomannan synthesis by galactomannan galactosyltransferase. Galactomannan is a noncellulosic polysaccharides of plant cell wall. This Arabidopsis thaliana (Mouse-ear cress) protein is Probable glucomannan 4-beta-mannosyltransferase 10.